We begin with the raw amino-acid sequence, 428 residues long: Tyrosine--tRNA ligase (428 aa).

L-tyrosine is bound at residue Tyr-37. Residues 42–51 (PTGSSLHAGH) carry the 'HIGH' region motif. Residues Tyr-175 and Gln-179 each contribute to the L-tyrosine site. A 'KMSKS' region motif is present at residues 235–239 (KFGKS). Position 238 (Lys-238) interacts with ATP. The region spanning 358-415 (ATILDLLVESGLEKSKGAARRTVGEGGAYVNNQRIEDIEWSPSAEELLHGSWLVLRKG) is the S4 RNA-binding domain.

It belongs to the class-I aminoacyl-tRNA synthetase family. TyrS type 1 subfamily. Homodimer.

The protein localises to the cytoplasm. The enzyme catalyses tRNA(Tyr) + L-tyrosine + ATP = L-tyrosyl-tRNA(Tyr) + AMP + diphosphate + H(+). In terms of biological role, catalyzes the attachment of tyrosine to tRNA(Tyr) in a two-step reaction: tyrosine is first activated by ATP to form Tyr-AMP and then transferred to the acceptor end of tRNA(Tyr). This chain is Tyrosine--tRNA ligase, found in Corynebacterium jeikeium (strain K411).